We begin with the raw amino-acid sequence, 139 residues long: Transcription antitermination protein NusB (139 aa).

It belongs to the NusB family.

In terms of biological role, involved in transcription antitermination. Required for transcription of ribosomal RNA (rRNA) genes. Binds specifically to the boxA antiterminator sequence of the ribosomal RNA (rrn) operons. This chain is Transcription antitermination protein NusB, found in Enterobacter sp. (strain 638).